Here is a 350-residue protein sequence, read N- to C-terminus: Ion-translocating oxidoreductase complex subunit D (350 aa).

4 consecutive transmembrane segments (helical) span residues 20–40 (IMLLVLLAAVPGIVVQTWFFG), 42–62 (GTVLQIVLAALTAWATEAAIL), 89–109 (IPPLAPWWMVVLGTAFAVVIA), and 123–143 (PAMIGYVVLLISFPVQMTSWL). The residue at position 187 (threonine 187) is an FMN phosphoryl threonine. Transmembrane regions (helical) follow at residues 214–234 (VLAGLGWQWVNIAWLAGGLFL), 242–262 (WHIPVSFLLSLGLCATLGWLF), 267–287 (LASPQMHLFSGATMLGAFFIL), 301–321 (LIFGALAGLLVWLIRSFGGYP), and 322–342 (DGVAFAVLLANITVPLIDYYT).

The protein belongs to the NqrB/RnfD family. As to quaternary structure, the complex is composed of six subunits: RnfA, RnfB, RnfC, RnfD, RnfE and RnfG. FMN serves as cofactor.

It is found in the cell inner membrane. In terms of biological role, part of a membrane-bound complex that couples electron transfer with translocation of ions across the membrane. The chain is Ion-translocating oxidoreductase complex subunit D from Klebsiella pneumoniae (strain 342).